The primary structure comprises 44 residues: U2-agatoxin-Ao1s (44 aa).

A propeptide spanning residues 1–9 (KKVYSFLKL) is cleaved from the precursor. 3 disulfide bridges follow: cysteine 12–cysteine 28, cysteine 19–cysteine 33, and cysteine 27–cysteine 43.

This sequence belongs to the neurotoxin 01 (U2-agtx) family. Expressed by the venom gland.

The protein resides in the secreted. Insect active toxin causing rapid but reversible paralysis in crickets. No activity shown in mammals. Does not show effect on mammalian voltage-gated calcium channels. The protein is U2-agatoxin-Ao1s of Agelena orientalis (Funnel-web spider).